Reading from the N-terminus, the 101-residue chain is Large ribosomal subunit protein eL43 (101 aa).

The segment at 40–62 (CPSCRSLVRLKRLAFGIWQCPKC) adopts a C4-type zinc-finger fold.

It belongs to the eukaryotic ribosomal protein eL43 family. Zn(2+) serves as cofactor.

The protein is Large ribosomal subunit protein eL43 of Pyrobaculum islandicum (strain DSM 4184 / JCM 9189 / GEO3).